Consider the following 132-residue polypeptide: D-ribose pyranase (132 aa).

Histidine 20 serves as the catalytic Proton donor. Substrate is bound by residues aspartate 28, histidine 99, and tyrosine 121–asparagine 123.

This sequence belongs to the RbsD / FucU family. RbsD subfamily. In terms of assembly, homodecamer.

The protein resides in the cytoplasm. The enzyme catalyses beta-D-ribopyranose = beta-D-ribofuranose. It participates in carbohydrate metabolism; D-ribose degradation; D-ribose 5-phosphate from beta-D-ribopyranose: step 1/2. Catalyzes the interconversion of beta-pyran and beta-furan forms of D-ribose. This chain is D-ribose pyranase, found in Chromobacterium violaceum (strain ATCC 12472 / DSM 30191 / JCM 1249 / CCUG 213 / NBRC 12614 / NCIMB 9131 / NCTC 9757 / MK).